Reading from the N-terminus, the 650-residue chain is Zinc finger CCCH domain-containing protein 55 (650 aa).

The tract at residues 67–162 is disordered; sequence NSPSSTPTSP…THSGSADAAG (96 aa). A compositionally biased stretch (low complexity) spans 105–128; it reads SPSSPSSTSPWSFNNCINGNNGNN. Residues 141–154 show a composition bias toward polar residues; sequence PFSSHQSNGLSATH. The C3H1-type zinc finger occupies 232–254; sequence PCVYFSRGLCKNGESCKFIHGGY. An RRM domain is found at 357–433; the sequence is RQIYLTFPAD…RVLVKPYKEK (77 aa). The interval 566-650 is disordered; it reads PVVNPMSVNN…PPVTTNNLMQ (85 aa). A compositionally biased stretch (basic and acidic residues) spans 581-590; that stretch reads AKEETNKSEL.

This Arabidopsis thaliana (Mouse-ear cress) protein is Zinc finger CCCH domain-containing protein 55.